Consider the following 259-residue polypeptide: UPF0246 protein PSPPH_1119 (259 aa).

This sequence belongs to the UPF0246 family.

This Pseudomonas savastanoi pv. phaseolicola (strain 1448A / Race 6) (Pseudomonas syringae pv. phaseolicola (strain 1448A / Race 6)) protein is UPF0246 protein PSPPH_1119.